A 388-amino-acid chain; its full sequence is Succinate--CoA ligase [ADP-forming] subunit beta (388 aa).

Positions 9-244 (KEILRKFGVA…PDEEDPKETQ (236 aa)) constitute an ATP-grasp domain. Residues Lys46, 53-55 (GRG), Glu99, Cys102, and Glu107 contribute to the ATP site. Mg(2+) contacts are provided by Asn199 and Asp213. Substrate contacts are provided by residues Asn264 and 321–323 (GIM).

Belongs to the succinate/malate CoA ligase beta subunit family. Heterotetramer of two alpha and two beta subunits. The cofactor is Mg(2+).

The enzyme catalyses succinate + ATP + CoA = succinyl-CoA + ADP + phosphate. It catalyses the reaction GTP + succinate + CoA = succinyl-CoA + GDP + phosphate. It participates in carbohydrate metabolism; tricarboxylic acid cycle; succinate from succinyl-CoA (ligase route): step 1/1. Succinyl-CoA synthetase functions in the citric acid cycle (TCA), coupling the hydrolysis of succinyl-CoA to the synthesis of either ATP or GTP and thus represents the only step of substrate-level phosphorylation in the TCA. The beta subunit provides nucleotide specificity of the enzyme and binds the substrate succinate, while the binding sites for coenzyme A and phosphate are found in the alpha subunit. This chain is Succinate--CoA ligase [ADP-forming] subunit beta, found in Anaeromyxobacter dehalogenans (strain 2CP-1 / ATCC BAA-258).